The sequence spans 64 residues: Basic secretory protease (64 aa).

A divalent metal cation serves as cofactor. Post-translationally, glycosylated.

With respect to regulation, inhibited by EDTA. In terms of biological role, metalloprotease, digests gelatin and azocasein (in vitro). The chain is Basic secretory protease from Boswellia serrata (Indian frankincense).